The chain runs to 91 residues: Small ribosomal subunit protein uS15 (91 aa).

This sequence belongs to the universal ribosomal protein uS15 family. Part of the 30S ribosomal subunit. Forms a bridge to the 50S subunit in the 70S ribosome, contacting the 23S rRNA.

Its function is as follows. One of the primary rRNA binding proteins, it binds directly to 16S rRNA where it helps nucleate assembly of the platform of the 30S subunit by binding and bridging several RNA helices of the 16S rRNA. Forms an intersubunit bridge (bridge B4) with the 23S rRNA of the 50S subunit in the ribosome. The chain is Small ribosomal subunit protein uS15 from Deinococcus geothermalis (strain DSM 11300 / CIP 105573 / AG-3a).